Here is a 330-residue protein sequence, read N- to C-terminus: MQPSETVEMQEMAQPSGQQRDVEARVQSAPANHSHDAGCTEMFCIAMSYVLIFLTFPVSVFMCIKIVQEYQRAVVFRLGRLVPDVKGPGIFFIIPCIDTFLNIDLRVASYNVPSQEILSRDSVTVSVDAVVYFKVFDPITSVVGVGNATDSTKLLAQTTLRTILGTHTLSEILSDREKISADMKISLDEATEPWGIKVERVELRDVRLPSQMQRAMAAEAEATRDAGAKIIAAEGELRASAALAEAATIISKSEGAMQLRYLHTLNAISSEKTSTIIFPFPMEILGGISKVGSGGTSQNFPVQEMMNAALQSIQRQDTVPATASSSGSRL.

Positions 1 to 19 (MQPSETVEMQEMAQPSGQQ) are enriched in polar residues. A disordered region spans residues 1–27 (MQPSETVEMQEMAQPSGQQRDVEARVQ). A helical transmembrane segment spans residues 42–62 (MFCIAMSYVLIFLTFPVSVFM).

This sequence belongs to the band 7/mec-2 family.

The protein localises to the membrane. The polypeptide is Stomatin-1 (sto-1) (Caenorhabditis elegans).